A 599-amino-acid chain; its full sequence is Beta-(1--&gt;2)glucan export ATP-binding/permease protein NdvA (599 aa).

The ABC transmembrane type-1 domain maps to 21–301 (TITMCVASVL…ISAFINQTVT (281 aa)). The next 5 helical transmembrane spans lie at 22–42 (ITMCVASVLVALVTLAEPVLF), 55–75 (IFSPLLMWAALGGFNIMAAVF), 156–176 (MRMSLVLIVLGVIYVMIGQLV), 248–268 (MASTFSMVVVLVLGAYFVTKG), and 276–296 (IAFIGFAQLMIGRLDQISAFI). An ABC transporter domain is found at 335–569 (IVFDNVTFEF…GGRFSDLLRA (235 aa)). 368–375 (GPTGAGKT) contributes to the ATP binding site.

It belongs to the ABC transporter superfamily. Beta-(1--&gt;2)glucan exporter (TC 3.A.1.108.1) family. In terms of assembly, homodimer.

Its subcellular location is the cell inner membrane. It catalyses the reaction [(1-&gt;2)-beta-D-glucosyl](n)(in) + ATP + H2O = [(1-&gt;2)-beta-D-glucosyl](n)(out) + ADP + phosphate + H(+). Functionally, involved in beta-(1--&gt;2)glucan export. Transmembrane domains (TMD) form a pore in the inner membrane and the ATP-binding domain (NBD) is responsible for energy generation. This Brucella suis biovar 1 (strain 1330) protein is Beta-(1--&gt;2)glucan export ATP-binding/permease protein NdvA.